We begin with the raw amino-acid sequence, 172 residues long: Galectin-related protein (172 aa).

N-acetylalanine is present on A2. Phosphoserine is present on residues S22 and S25. Positions 39–168 (PFCGHIKGGM…TIKINGDLQI (130 aa)) constitute a Galectin domain.

In terms of assembly, monomer.

In terms of biological role, does not bind lactose, and may not bind carbohydrates. This chain is Galectin-related protein (LGALSL), found in Homo sapiens (Human).